The sequence spans 350 residues: Sterol-4-alpha-carboxylate 3-dehydrogenase ERG26, decarboxylating (350 aa).

Residues 12 to 18, 63 to 64, and 85 to 87 each bind NADP(+); these read GGSGFLG, DL, and SAS. Residues Ser-125 and Tyr-152 each contribute to the substrate site. NADP(+) is bound by residues Tyr-152, Lys-156, and 179-182; that span reads PAGI. Residue Lys-156 is the Proton donor of the active site.

This sequence belongs to the 3-beta-HSD family. Heterotetramer of ERG25, ERG26, ERG27 and ERG28. ERG28 acts as a scaffold to tether ERG27 and other 4,4-demethylation-related enzymes, forming a demethylation enzyme complex, in the endoplasmic reticulum.

Its subcellular location is the endoplasmic reticulum membrane. It catalyses the reaction 4beta-methylzymosterol-4alpha-carboxylate + NADP(+) = 3-dehydro-4-methylzymosterol + CO2 + NADPH. It functions in the pathway steroid biosynthesis; zymosterol biosynthesis; zymosterol from lanosterol: step 4/6. In terms of biological role, sterol-4-alpha-carboxylate 3-dehydrogenase; part of the third module of ergosterol biosynthesis pathway that includes the late steps of the pathway. ERG26 is a catalytic component of the C-4 demethylation complex that catalyzes the oxidative decarboxylation that results in a reduction of the 3-beta-hydroxy group at the C-3 carbon to an oxo group. The third module or late pathway involves the ergosterol synthesis itself through consecutive reactions that mainly occur in the endoplasmic reticulum (ER) membrane. Firstly, the squalene synthase ERG9 catalyzes the condensation of 2 farnesyl pyrophosphate moieties to form squalene, which is the precursor of all steroids. Squalene synthase is crucial for balancing the incorporation of farnesyl diphosphate (FPP) into sterol and nonsterol isoprene synthesis. Secondly, the squalene epoxidase ERG1 catalyzes the stereospecific oxidation of squalene to (S)-2,3-epoxysqualene, which is considered to be a rate-limiting enzyme in steroid biosynthesis. Then, the lanosterol synthase ERG7 catalyzes the cyclization of (S)-2,3 oxidosqualene to lanosterol, a reaction that forms the sterol core. In the next steps, lanosterol is transformed to zymosterol through a complex process involving various demethylation, reduction and desaturation reactions. The lanosterol 14-alpha-demethylase ERG11 (also known as CYP51) catalyzes C14-demethylation of lanosterol to produce 4,4'-dimethyl cholesta-8,14,24-triene-3-beta-ol, which is critical for ergosterol biosynthesis. The C-14 reductase ERG24 reduces the C14=C15 double bond of 4,4-dimethyl-cholesta-8,14,24-trienol to produce 4,4-dimethyl-cholesta-8,24-dienol. 4,4-dimethyl-cholesta-8,24-dienol is substrate of the C-4 demethylation complex ERG25-ERG26-ERG27 in which ERG25 catalyzes the three-step monooxygenation required for the demethylation of 4,4-dimethyl and 4alpha-methylsterols, ERG26 catalyzes the oxidative decarboxylation that results in a reduction of the 3-beta-hydroxy group at the C-3 carbon to an oxo group, and ERG27 is responsible for the reduction of the keto group on the C-3. ERG28 has a role as a scaffold to help anchor ERG25, ERG26 and ERG27 to the endoplasmic reticulum and ERG29 regulates the activity of the iron-containing C4-methylsterol oxidase ERG25. Then, the sterol 24-C-methyltransferase ERG6 catalyzes the methyl transfer from S-adenosyl-methionine to the C-24 of zymosterol to form fecosterol. The C-8 sterol isomerase ERG2 catalyzes the reaction which results in unsaturation at C-7 in the B ring of sterols and thus converts fecosterol to episterol. The sterol-C5-desaturase ERG3 then catalyzes the introduction of a C-5 double bond in the B ring to produce 5-dehydroepisterol. The C-22 sterol desaturase ERG5 further converts 5-dehydroepisterol into ergosta-5,7,22,24(28)-tetraen-3beta-ol by forming the C-22(23) double bond in the sterol side chain. Finally, ergosta-5,7,22,24(28)-tetraen-3beta-ol is substrate of the C-24(28) sterol reductase ERG4 to produce ergosterol. This chain is Sterol-4-alpha-carboxylate 3-dehydrogenase ERG26, decarboxylating, found in Candida albicans (strain SC5314 / ATCC MYA-2876) (Yeast).